Here is a 130-residue protein sequence, read N- to C-terminus: Protein ApaG (130 aa).

In terms of domain architecture, ApaG spans 3–127; that stretch reads KAETRGITVT…FSLDSPHLRR (125 aa).

The polypeptide is Protein ApaG (Methylorubrum populi (strain ATCC BAA-705 / NCIMB 13946 / BJ001) (Methylobacterium populi)).